Here is a 354-residue protein sequence, read N- to C-terminus: MAYRYHNDLLAPYLALPQGDKIQAEYVWVDGDGGLRSKTTTVSKKVTDIGSLRIWDFDGSSTNQAPGHDSDVYLRPAAIFKDPFRGGDNILVLAETYNSDGTPNRTNFRHHAAKVMEQAKEDVPWFGLEQEYTLFDADGSPYGWPKGGFPGPQGPYYCGAGTGKVFARDLIEAHYRACLYSGINISGINAEVMPSQWEFQVGPCEGISMGDHLWMARYLLVRIAEQWAVKVSFHPKPLQGDWNGAGCHTNYSTKAMREPGGMKVIEEAIEKLSKRHDEHIAVYGEDNDLRLTGRHETGHIGAFSSGVANRGASIRVPRHVAAQGYGYLEDRRPASNIDPYRVTSIIVETTLLNA.

The 80-residue stretch at 22 to 101 (IQAEYVWVDG…VLAETYNSDG (80 aa)) folds into the GS beta-grasp domain. One can recognise a GS catalytic domain in the interval 108-354 (FRHHAAKVME…IIVETTLLNA (247 aa)).

Belongs to the glutamine synthetase family. Homooctamer.

The protein localises to the cytoplasm. It catalyses the reaction L-glutamate + NH4(+) + ATP = L-glutamine + ADP + phosphate + H(+). The sequence is that of Glutamine synthetase (GLN1) from Hebeloma cylindrosporum.